A 603-amino-acid polypeptide reads, in one-letter code: Pyruvate oxidase (603 aa).

The segment at 1–191 (MVMKQTKQTN…WYASANSYQT (191 aa)) is core. The interval 192–342 (PLLPEPDVQA…ILAQVSERES (151 aa)) is FAD-binding. The interval 343-603 (TPWWQANLAN…LQHQIGQGGF (261 aa)) is thiamine pyrophosphate binding. Asp-447, Asn-474, and Gln-476 together coordinate Mg(2+).

Belongs to the TPP enzyme family. Homotetramer. It depends on FAD as a cofactor. Requires Mg(2+) as cofactor. Thiamine diphosphate is required as a cofactor.

The catalysed reaction is pyruvate + phosphate + O2 + H(+) = acetyl phosphate + H2O2 + CO2. In terms of biological role, important for the aerobic growth. Decarboxylates pyruvate in four steps. The energy released is partially stored in acetyl phosphate. The protein is Pyruvate oxidase (pox5) of Lactiplantibacillus plantarum (strain ATCC BAA-793 / NCIMB 8826 / WCFS1) (Lactobacillus plantarum).